The chain runs to 355 residues: Agamous-like MADS-box protein AGL81 (355 aa).

The interval 1–22 is disordered; sequence MAIRSLPSSSRCSSSSSSSSYS. An MADS-box domain is found at 26–68; sequence TSLSNRLETIFKKASELCTLCDIEACVIYYGPDGELKTWPPER. Residues 162 to 174 show a composition bias toward basic and acidic residues; sequence VESQKHKETKPDH. A disordered region spans residues 162–186; that stretch reads VESQKHKETKPDHQSLASSSLNHQT. Over residues 176 to 186 the composition is skewed to polar residues; the sequence is SLASSSLNHQT.

In terms of assembly, interacts with MEE14/CBP1.

Its subcellular location is the nucleus. Functionally, probable transcription factor that may function in the maintenance of the proper function of the central cell in pollen tube attraction. The sequence is that of Agamous-like MADS-box protein AGL81 from Arabidopsis thaliana (Mouse-ear cress).